We begin with the raw amino-acid sequence, 446 residues long: MFKAMLSSIVMRTMQKKINAQTITEKDVELVLKEIRIALLDADVNLLVVKNFIKAIRDKTVGQTIEPGQDLQKSLLKTIKTELINILSQPNQELNEKRPLKIMMVGLQGSGKTTTCGKLAYWLEKKYKQKTMLVGLDIYRPAAIEQLETLSQQTNSVFFAQGTQPVAKTTKAALSAFKTAKCQTIICDTAGRLQTNETLMDELVSVKNELNPDEIIMVVDGLSGQEIINVAQTFHKRLKLTGFIISKLDSDARAGAALSLASLLQVPIKLIGVSEKLDGLEQFHPERIANRILGLGDVMSLVEKAEQVFDKKDLTKTISKMFLGKMDLEDLLIYMQQMHKMGSVSSLIKMLPANFSVSEENAELIENKIELWKVLINSMTREERRHPKLINRDPNRKQRIIKGSGRKMDELNKLMKEWNKMQLKATEMGKLLKTGSNPFGGFGQFF.

Residues 106-113 (GLQGSGKT), 188-192 (DTAGR), and 246-249 (SKLD) each bind GTP.

The protein belongs to the GTP-binding SRP family. SRP54 subfamily. In terms of assembly, part of the signal recognition particle protein translocation system, which is composed of SRP and FtsY.

Its subcellular location is the cytoplasm. It carries out the reaction GTP + H2O = GDP + phosphate + H(+). Functionally, involved in targeting and insertion of nascent membrane proteins into the cytoplasmic membrane. Binds to the hydrophobic signal sequence of the ribosome-nascent chain (RNC) as it emerges from the ribosomes. The SRP-RNC complex is then targeted to the cytoplasmic membrane where it interacts with the SRP receptor FtsY. The sequence is that of Signal recognition particle protein from Mycoplasma genitalium (strain ATCC 33530 / DSM 19775 / NCTC 10195 / G37) (Mycoplasmoides genitalium).